The primary structure comprises 126 residues: Small ribosomal subunit protein uS13 (126 aa).

The disordered stretch occupies residues H92 to K126.

Belongs to the universal ribosomal protein uS13 family. In terms of assembly, part of the 30S ribosomal subunit. Forms a loose heterodimer with protein S19. Forms two bridges to the 50S subunit in the 70S ribosome.

Functionally, located at the top of the head of the 30S subunit, it contacts several helices of the 16S rRNA. In the 70S ribosome it contacts the 23S rRNA (bridge B1a) and protein L5 of the 50S subunit (bridge B1b), connecting the 2 subunits; these bridges are implicated in subunit movement. Contacts the tRNAs in the A and P-sites. This Deinococcus geothermalis (strain DSM 11300 / CIP 105573 / AG-3a) protein is Small ribosomal subunit protein uS13.